Consider the following 306-residue polypeptide: uncharacterized protein (306 aa).

This is an uncharacterized protein from Haemophilus influenzae (strain ATCC 51907 / DSM 11121 / KW20 / Rd).